The sequence spans 716 residues: Protein C-mannosyl-transferase DPY19L3 (716 aa).

Topologically, residues 1-43 (MMSIRQRREIRATEVSEDFPAQEENVKLENKLPSGCTSRRLWK) are cytoplasmic. Residues 44 to 64 (ILSLTIGGTIALCIGLLTSVY) traverse the membrane as a helical segment. Residues 65–154 (LATLHENDLW…RVLPVQKYLE (90 aa)) are Lumenal-facing. N-linked (GlcNAc...) asparagine glycosylation occurs at Asn-118. The helical transmembrane segment at 155–182 (PVYFYIYTLFGLQAIYVTALYITSWLLS) threads the bilayer. At 183 to 184 (GT) the chain is on the cytoplasmic side. The segment at residues 185-197 (WLSGLLAAFWYVT) is an intramembrane region (name=3). The Cytoplasmic portion of the chain corresponds to 198 to 215 (NRIDTTRVEFTIPLRENW). Residues 216 to 230 (ALPFFAIQIAAITYF) constitute an intramembrane region (name=4). At 231–239 (LRPNLQPLS) the chain is on the cytoplasmic side. A helical membrane pass occupies residues 240-256 (ERLTLLAIFISTFLFSL). The Lumenal portion of the chain corresponds to 257–262 (TWQFNQ). The chain crosses the membrane as a helical span at residues 263–279 (FMMLMQALVLFTLDSLD). Over 280 to 289 (MLPAVKATWL) the chain is Cytoplasmic. Residues 290–306 (YGIQITSLLLVCILQFF) traverse the membrane as a helical segment. Topologically, residues 307-308 (NS) are lumenal. A helical membrane pass occupies residues 309–323 (MILGSLLISFNLSVF). The Cytoplasmic segment spans residues 324-338 (IARKLQKNLKTGSFL). Residues 339–359 (NRLGKLLLHLFMVLCLTLFLN) traverse the membrane as a helical segment. Residues 360 to 414 (NIIKKILNLKSDEHIFKFLKAKFGLGATRDFDANLYLCEEAFGLLPFNTFGRLSD) are Lumenal-facing. The helical transmembrane segment at 415–437 (TLLFYAYIFVLSITVIVAFVVAF) threads the bilayer. Residues 438-465 (HNLSDSTNQQSVGKMEKGTVDLKPETAY) are Cytoplasmic-facing. A helical transmembrane segment spans residues 466–485 (NLIHTILFGFLALSTMRMKY). Residues 486-487 (LW) are Lumenal-facing. A helical transmembrane segment spans residues 488-499 (TSHMCVFASFGL). Residues 500-522 (CSPEIWELLLKSVHLYNPKRICI) lie on the Cytoplasmic side of the membrane. A helical transmembrane segment spans residues 523–539 (MRYSVPILILLYLCYKF). Residues 540–716 (WPGMMDELSE…FHVYKLSRNK (177 aa)) are Lumenal-facing. Residue Asn-704 is glycosylated (N-linked (GlcNAc...) asparagine).

It belongs to the dpy-19 family.

It is found in the endoplasmic reticulum membrane. It carries out the reaction L-tryptophyl-[protein] + a di-trans,poly-cis-dolichyl beta-D-mannosyl phosphate = C-alpha-D-mannosyl-L-tryptophyl-[protein] + a di-trans,poly-cis-dolichyl phosphate + H(+). Its pathway is protein modification; protein glycosylation. Its function is as follows. C-mannosyltransferase that mediates C-mannosylation of tryptophan residues on target proteins. The reaction occurs on the luminal side of the endoplasmic reticulum and involves the transfer of a mannose unit from a dolichylphosphate mannose (Dol-P-Man) donor to an acceptor protein containing a WxxW or WxxC consensus sequence. C-mannosylates RSPO1, a Wnt signaling regulator, preferentially at the first Trp residue in the sequence WxxW. C-mannosylates the netrin receptor UNC5A, preferentially at the third tryptophan of WxxWxxWxxC sequence. The protein is Protein C-mannosyl-transferase DPY19L3 (DPY19L3) of Pongo abelii (Sumatran orangutan).